Reading from the N-terminus, the 254-residue chain is Type III pantothenate kinase (254 aa).

6-13 (DVGNTNTT) contacts ATP. Substrate-binding positions include Y100 and 107–110 (GADR). D109 (proton acceptor) is an active-site residue. Position 129 (D129) interacts with K(+). T132 lines the ATP pocket. Position 184 (T184) interacts with substrate.

It belongs to the type III pantothenate kinase family. As to quaternary structure, homodimer. It depends on NH4(+) as a cofactor. Requires K(+) as cofactor.

It is found in the cytoplasm. The enzyme catalyses (R)-pantothenate + ATP = (R)-4'-phosphopantothenate + ADP + H(+). It participates in cofactor biosynthesis; coenzyme A biosynthesis; CoA from (R)-pantothenate: step 1/5. Functionally, catalyzes the phosphorylation of pantothenate (Pan), the first step in CoA biosynthesis. The protein is Type III pantothenate kinase of Anaeromyxobacter dehalogenans (strain 2CP-C).